We begin with the raw amino-acid sequence, 170 residues long: Cathelicidin antimicrobial peptide (170 aa).

The signal sequence occupies residues 1-30 (MKTQRDGPSLGRWSLVLLLLGLTMPLAVIA). The propeptide at 31-131 (RVLSYQEAVL…DISCDKDKRK (101 aa)) is cathelin-like domain (CLD). Cystine bridges form between Cys-86–Cys-97 and Cys-108–Cys-125. The segment at 150-162 (LKNIGQRIKDFFG) is active core.

This sequence belongs to the cathelicidin family. As to quaternary structure, monomer, homodimer or homotrimer (in vitro). Oligomerizes as tetra- or hexamer in solution (in vitro). Post-translationally, proteolytically cleaved by proteinase PRTN3 into antibacterial peptide LL-37. Proteolytically cleaved by cathepsin CTSG and neutrophil elastase ELANE. Resistant to proteolytic degradation in solution, and when bound to both zwitterionic (mimicking mammalian membranes) and negatively charged membranes (mimicking bacterial membranes). In terms of processing, after secretion onto the skin surface, the CAMP gene product is processed by a serine protease-dependent mechanism into multiple novel antimicrobial peptides distinct from and shorter than cathelicidin LL-37. These peptides show enhanced antimicrobial action, acquiring the ability to kill skin pathogens such as S.aureus, E.coli and C.albicans. These peptides have lost the ability to stimulate CXCL8/IL8 release from keratinocytes. The peptides act synergistically, killing bacteria at lower concentrations when present together, and maintain activity at increased salt condition.

The protein localises to the secreted. Its subcellular location is the vesicle. Its function is as follows. Antimicrobial protein that is an integral component of the innate immune system. Binds to bacterial lipopolysaccharides (LPS). Acts via neutrophil N-formyl peptide receptors to enhance the release of CXCL2. Postsecretory processing generates multiple cathelicidin antimicrobial peptides with various lengths which act as a topical antimicrobial defense in sweat on skin. The unprocessed precursor form, cathelicidin antimicrobial peptide, inhibits the growth of Gram-negative E.coli and E.aerogenes with efficiencies comparable to that of the mature peptide LL-37 (in vitro). Antimicrobial peptide that is an integral component of the innate immune system. Binds to bacterial lipopolysaccharides (LPS). Causes membrane permeabilization by forming transmembrane pores (in vitro). Causes lysis of E.coli. Exhibits antimicrobial activity against Gram-negative bacteria such as P.aeruginosa, S.typhimurium, E.aerogenes, E.coli and P.syringae, Gram-positive bacteria such as L.monocytogenes, S.epidermidis, S.pyogenes and S.aureus, as well as vancomycin-resistant enterococci (in vitro). Exhibits antimicrobial activity against methicillin-resistant S.aureus, P.mirabilis, and C.albicans in low-salt media, but not in media containing 100 mM NaCl (in vitro). Forms chiral supramolecular assemblies with quinolone signal (PQS) molecules of P.aeruginosa, which may lead to interference of bacterial quorum signaling and perturbance of bacterial biofilm formation. May form supramolecular fiber-like assemblies on bacterial membranes. Induces cytokine and chemokine producation as well as TNF/TNFA and CSF2/GMCSF production in normal human keratinocytes. Exhibits hemolytic activity against red blood cells. Functionally, exhibits antimicrobial activity against E.coli and B.megaterium (in vitro). This Ateles fusciceps robustus (Colombian black-faced spider monkey) protein is Cathelicidin antimicrobial peptide.